The sequence spans 164 residues: 3-isopropylmalate dehydratase small subunit (164 aa).

It belongs to the LeuD family. LeuD type 2 subfamily. As to quaternary structure, heterodimer of LeuC and LeuD.

It catalyses the reaction (2R,3S)-3-isopropylmalate = (2S)-2-isopropylmalate. It participates in amino-acid biosynthesis; L-leucine biosynthesis; L-leucine from 3-methyl-2-oxobutanoate: step 2/4. In terms of biological role, catalyzes the isomerization between 2-isopropylmalate and 3-isopropylmalate, via the formation of 2-isopropylmaleate. This is 3-isopropylmalate dehydratase small subunit from Syntrophus aciditrophicus (strain SB).